A 336-amino-acid chain; its full sequence is tRNA N6-adenosine threonylcarbamoyltransferase (336 aa).

Fe cation-binding residues include histidine 114 and histidine 118. Substrate-binding positions include 136 to 140 (LVSGG), aspartate 169, glycine 182, aspartate 186, and asparagine 275. Aspartate 301 provides a ligand contact to Fe cation.

The protein belongs to the KAE1 / TsaD family. Requires Fe(2+) as cofactor.

The protein localises to the cytoplasm. It carries out the reaction L-threonylcarbamoyladenylate + adenosine(37) in tRNA = N(6)-L-threonylcarbamoyladenosine(37) in tRNA + AMP + H(+). Its function is as follows. Required for the formation of a threonylcarbamoyl group on adenosine at position 37 (t(6)A37) in tRNAs that read codons beginning with adenine. Is involved in the transfer of the threonylcarbamoyl moiety of threonylcarbamoyl-AMP (TC-AMP) to the N6 group of A37, together with TsaE and TsaB. TsaD likely plays a direct catalytic role in this reaction. The sequence is that of tRNA N6-adenosine threonylcarbamoyltransferase from Streptococcus sanguinis (strain SK36).